The chain runs to 291 residues: Ajmaline N-methyltransferase (291 aa).

The segment at 71 to 80 (MLDVGCGIGG) is SAM motif I. The Vacuolar targeting signal motif lies at 133–139 (DGAFDLV). The interval 134 to 142 (GAFDLVLSI) is SAM motif II. The interval 161 to 170 (VAASGATIII) is SAM motif III.

It belongs to the class I-like SAM-binding methyltransferase superfamily. gTMT family. In terms of assembly, homodimer. Mainly expressed in roots, but barely detectable in stems and flowers.

It localises to the vacuole membrane. It carries out the reaction ajmaline + S-adenosyl-L-methionine = 4-methylajmaline + S-adenosyl-L-homocysteine + H(+). The enzyme catalyses norajmaline + S-adenosyl-L-methionine = 4-methylnorajmaline + S-adenosyl-L-homocysteine + H(+). It participates in alkaloid biosynthesis; ajmaline biosynthesis. Functionally, N-methyltransferase involved in the biosynthesis of ajmaline-type monoterpenoid indole alkaloids (MIAs) natural products, important plant-derived pharmaceuticals used in the therapy of heart disorders. Catalyzes the indole N-methylation of ajmaline to produce 4-methylajmaline. Also able, with a lower efficiency, to mediates the conversion of norajmaline to 4-methylnorajmaline. This is Ajmaline N-methyltransferase from Rauvolfia serpentina (Serpentine wood).